The following is a 447-amino-acid chain: Argininosuccinate synthase (447 aa).

ATP-binding positions include 17–25 (AFSGGLDTS) and A43. Y99 lines the L-citrulline pocket. Positions 129 and 131 each coordinate ATP. L-aspartate contacts are provided by T131, N135, and D136. Residue N135 participates in L-citrulline binding. Position 136 (D136) interacts with ATP. L-citrulline-binding residues include R139 and S192. D194 is a binding site for ATP. L-citrulline is bound by residues T201, E203, and E280.

It belongs to the argininosuccinate synthase family. Type 2 subfamily. Homotetramer.

The protein localises to the cytoplasm. It carries out the reaction L-citrulline + L-aspartate + ATP = 2-(N(omega)-L-arginino)succinate + AMP + diphosphate + H(+). The protein operates within amino-acid biosynthesis; L-arginine biosynthesis; L-arginine from L-ornithine and carbamoyl phosphate: step 2/3. This Citrobacter koseri (strain ATCC BAA-895 / CDC 4225-83 / SGSC4696) protein is Argininosuccinate synthase.